The sequence spans 318 residues: Methionyl-tRNA formyltransferase (318 aa).

Position 112–115 (112–115 (SILP)) interacts with (6S)-5,6,7,8-tetrahydrofolate.

The protein belongs to the Fmt family.

The catalysed reaction is L-methionyl-tRNA(fMet) + (6R)-10-formyltetrahydrofolate = N-formyl-L-methionyl-tRNA(fMet) + (6S)-5,6,7,8-tetrahydrofolate + H(+). Its function is as follows. Attaches a formyl group to the free amino group of methionyl-tRNA(fMet). The formyl group appears to play a dual role in the initiator identity of N-formylmethionyl-tRNA by promoting its recognition by IF2 and preventing the misappropriation of this tRNA by the elongation apparatus. The chain is Methionyl-tRNA formyltransferase from Shewanella baltica (strain OS223).